Consider the following 784-residue polypeptide: Kinesin-like protein Klp68D (784 aa).

Positions C19–I344 constitute a Kinesin motor domain. G106–T113 serves as a coordination point for ATP. Residues N351 to V385 adopt a coiled-coil conformation. Disordered regions lie at residues R371–R449, K605–L652, and I742–K784. A compositionally biased stretch (basic residues) spans T386 to K396. Residues P416–S428 are compositionally biased toward acidic residues. Residues A426–F582 adopt a coiled-coil conformation. Residues E429–R449 show a composition bias toward basic and acidic residues. Basic residues predominate over residues S622–R634. Positions K769–A778 are enriched in low complexity.

The protein belongs to the TRAFAC class myosin-kinesin ATPase superfamily. Kinesin family. Kinesin II subfamily. As to expression, expressed primarily in the central nervous system and in a subset of the peripheral nervous system during embryogenesis.

It is found in the cytoplasm. The protein localises to the cytoskeleton. Its function is as follows. Plus-end directed microtubule motor that may be used for anterograde axonal transport and could conceivably move cargos in fly neurons different than those moved by kinesin heavy chain or other plus-end directed motors. The protein is Kinesin-like protein Klp68D (Klp68D) of Drosophila melanogaster (Fruit fly).